We begin with the raw amino-acid sequence, 486 residues long: Ribulose bisphosphate carboxylase large chain (486 aa).

Substrate contacts are provided by N125 and T175. Catalysis depends on K177, which acts as the Proton acceptor. Position 179 (K179) interacts with substrate. Mg(2+) contacts are provided by K203, D205, and E206. K203 bears the N6-carboxylysine mark. Catalysis depends on H295, which acts as the Proton acceptor. 3 residues coordinate substrate: R296, H328, and S380.

It belongs to the RuBisCO large chain family. Type I subfamily. As to quaternary structure, heterohexadecamer of 8 large chains and 8 small chains. The cofactor is Mg(2+).

It carries out the reaction 2 (2R)-3-phosphoglycerate + 2 H(+) = D-ribulose 1,5-bisphosphate + CO2 + H2O. The enzyme catalyses D-ribulose 1,5-bisphosphate + O2 = 2-phosphoglycolate + (2R)-3-phosphoglycerate + 2 H(+). Functionally, ruBisCO catalyzes two reactions: the carboxylation of D-ribulose 1,5-bisphosphate, the primary event in carbon dioxide fixation, as well as the oxidative fragmentation of the pentose substrate. Both reactions occur simultaneously and in competition at the same active site. The chain is Ribulose bisphosphate carboxylase large chain from Bradyrhizobium diazoefficiens (strain JCM 10833 / BCRC 13528 / IAM 13628 / NBRC 14792 / USDA 110).